Consider the following 258-residue polypeptide: MSDLKAAALRALKLMDLTTLNDNDTDEAVIALCKNAKTAVGNTAAVCIYPRFVPIAKKTLREQGTPDVRIATVTNFPHGNDDIAIAVAETKAAVAYGADEVDVVFPYRALIAGNETVGFELVKQCKEACGDILLKVIIETGELKEEALIKKTSQICIEAGANFIKTSTGKVPVNATPEYARMMLEVIRDMGVAKTVGFKPAGGVRTAEDAQAYLAMADDILGGDWADNMHYRFGASSLLTNLLNTLEVTAETADPSAY.

The Proton donor/acceptor role is filled by aspartate 102. Lysine 165 serves as the catalytic Schiff-base intermediate with acetaldehyde. Lysine 199 (proton donor/acceptor) is an active-site residue.

Belongs to the DeoC/FbaB aldolase family. DeoC type 2 subfamily.

It is found in the cytoplasm. It carries out the reaction 2-deoxy-D-ribose 5-phosphate = D-glyceraldehyde 3-phosphate + acetaldehyde. Its pathway is carbohydrate degradation; 2-deoxy-D-ribose 1-phosphate degradation; D-glyceraldehyde 3-phosphate and acetaldehyde from 2-deoxy-alpha-D-ribose 1-phosphate: step 2/2. Functionally, catalyzes a reversible aldol reaction between acetaldehyde and D-glyceraldehyde 3-phosphate to generate 2-deoxy-D-ribose 5-phosphate. This Aliivibrio salmonicida (strain LFI1238) (Vibrio salmonicida (strain LFI1238)) protein is Deoxyribose-phosphate aldolase.